Here is a 64-residue protein sequence, read N- to C-terminus: uncharacterized protein (64 aa).

The chain crosses the membrane as a helical span at residues 15-37; the sequence is VVVPRFVRFIVYVVLFTVAVQRV.

It belongs to the HHV-5 US34A protein family.

The protein localises to the host membrane. This is an uncharacterized protein from Homo sapiens (Human).